Here is a 352-residue protein sequence, read N- to C-terminus: NADP-dependent isopropanol dehydrogenase (352 aa).

The Zn(2+) site is built by Cys-37, His-59, and Asp-150. Residues 175-178, 198-200, Tyr-218, 265-267, and Lys-340 contribute to the NADP(+) site; these read IGPV, GSR, and VNY.

The protein belongs to the zinc-containing alcohol dehydrogenase family. As to quaternary structure, homotetramer. Zn(2+) is required as a cofactor.

The catalysed reaction is propan-2-ol + NADP(+) = acetone + NADPH + H(+). Functionally, alcohol dehydrogenase with a preference for medium chain secondary alcohols, such as 2-butanol and isopropanol. Has very low activity with primary alcohols, such as ethanol. Under physiological conditions, the enzyme reduces aldehydes and 2-ketones to produce secondary alcohols. Is also active with acetaldehyde and propionaldehyde. In Thermoanaerobacter brockii (Thermoanaerobium brockii), this protein is NADP-dependent isopropanol dehydrogenase (adh).